The sequence spans 891 residues: Aconitate hydratase A (891 aa).

Residues Cys-435, Cys-501, and Cys-504 each contribute to the [4Fe-4S] cluster site.

This sequence belongs to the aconitase/IPM isomerase family. As to quaternary structure, monomer. It depends on [4Fe-4S] cluster as a cofactor.

It catalyses the reaction citrate = D-threo-isocitrate. It carries out the reaction (2S,3R)-3-hydroxybutane-1,2,3-tricarboxylate = 2-methyl-cis-aconitate + H2O. Its pathway is carbohydrate metabolism; tricarboxylic acid cycle; isocitrate from oxaloacetate: step 2/2. The protein operates within organic acid metabolism; propanoate degradation. Its function is as follows. Involved in the catabolism of short chain fatty acids (SCFA) via the tricarboxylic acid (TCA)(acetyl degradation route) and probably the 2-methylcitrate cycle I (propionate degradation route). Catalyzes the reversible isomerization of citrate to isocitrate via cis-aconitate. The apo form of AcnA functions as a RNA-binding regulatory protein. Could catalyze the hydration of 2-methyl-cis-aconitate to yield (2R,3S)-2-methylisocitrate. In Legionella pneumophila subsp. pneumophila (strain Philadelphia 1 / ATCC 33152 / DSM 7513), this protein is Aconitate hydratase A (acn).